Consider the following 208-residue polypeptide: T-cell surface glycoprotein CD8 beta chain (208 aa).

Residues 1-21 form the signal peptide; the sequence is MQPWLWLVFSVKLSALWGSSA. The Ig-like V-type domain occupies 22–131; sequence LLQTPSSLLV…MVVFGTGTKL (110 aa). Over 22–168 the chain is Extracellular; the sequence is LLQTPSSLLV…KTQKGLTCGL (147 aa). Residues asparagine 34, asparagine 88, and asparagine 94 are each glycosylated (N-linked (GlcNAc...) asparagine). Residues cysteine 41 and cysteine 115 are joined by a disulfide bond. The chain crosses the membrane as a helical span at residues 169–189; sequence ITLSLLVACILVLLVSLSVAI. Over 190-208 the chain is Cytoplasmic; the sequence is HFHCMRRRARIHFMKQFHK.

As to quaternary structure, forms disulfide-linked heterodimers with CD8A at the cell surface. Interacts with CD3D; this interaction couples TCR-CD3 with CD8. Interacts with LCK. Phosphorylated as a consequence of T-cell activation. Post-translationally, palmitoylated at the cytoplasmic tail and thereby targets the heterodimer CD8A/CD8B to lipid rafts unlike CD8A homodimers.

Its subcellular location is the cell membrane. Its function is as follows. Integral membrane glycoprotein that plays an essential role in the immune response and serves multiple functions in responses against both external and internal offenses. In T-cells, functions primarily as a coreceptor for MHC class I molecule:peptide complex. The antigens presented by class I peptides are derived from cytosolic proteins while class II derived from extracellular proteins. Interacts simultaneously with the T-cell receptor (TCR) and the MHC class I proteins presented by antigen presenting cells (APCs). In turn, recruits the Src kinase LCK to the vicinity of the TCR-CD3 complex. A palmitoylation site in the cytoplasmic tail of CD8B chain contributes to partitioning of CD8 into the plasma membrane lipid rafts where signaling proteins are enriched. Once LCK recruited, it initiates different intracellular signaling pathways by phosphorylating various substrates ultimately leading to lymphokine production, motility, adhesion and activation of cytotoxic T-lymphocytes (CTLs). Additionally, plays a critical role in thymic selection of CD8+ T-cells. In Rattus norvegicus (Rat), this protein is T-cell surface glycoprotein CD8 beta chain (Cd8b).